The following is a 407-amino-acid chain: Argininosuccinate synthase (407 aa).

ATP is bound by residues 10–18 (AYSGGLDTS) and Ala37. Tyr88 and Ser93 together coordinate L-citrulline. Position 118 (Gly118) interacts with ATP. Positions 120, 124, and 125 each coordinate L-aspartate. An L-citrulline-binding site is contributed by Asn124. Residues Arg128, Ser179, Ser188, Glu264, and Tyr276 each contribute to the L-citrulline site.

Belongs to the argininosuccinate synthase family. Type 1 subfamily. Homotetramer.

The protein localises to the cytoplasm. It carries out the reaction L-citrulline + L-aspartate + ATP = 2-(N(omega)-L-arginino)succinate + AMP + diphosphate + H(+). It participates in amino-acid biosynthesis; L-arginine biosynthesis; L-arginine from L-ornithine and carbamoyl phosphate: step 2/3. This Jannaschia sp. (strain CCS1) protein is Argininosuccinate synthase.